A 463-amino-acid polypeptide reads, in one-letter code: Methionine aminopeptidase 2-2 (463 aa).

Residues 1–107 are disordered; it reads MGAKTFEGGD…VPLSQLFPDG (107 aa). Acidic residues predominate over residues 37–53; that stretch reads EDGDGEFGTDDDDDGDG. Basic residues predominate over residues 69–83; sequence PKKRKRSKKKKSNKK. His215 lines the substrate pocket. 3 residues coordinate a divalent metal cation: Asp236, Asp247, and His316. Substrate is bound at residue His324. The a divalent metal cation site is built by Glu349 and Glu444.

The protein belongs to the peptidase M24A family. Methionine aminopeptidase eukaryotic type 2 subfamily. Requires Co(2+) as cofactor. It depends on Zn(2+) as a cofactor. Mn(2+) serves as cofactor. The cofactor is Fe(2+).

It localises to the cytoplasm. The catalysed reaction is Release of N-terminal amino acids, preferentially methionine, from peptides and arylamides.. Functionally, cotranslationally removes the N-terminal methionine from nascent proteins. The N-terminal methionine is often cleaved when the second residue in the primary sequence is small and uncharged (Met-Ala-, Cys, Gly, Pro, Ser, Thr, or Val). This Talaromyces marneffei (strain ATCC 18224 / CBS 334.59 / QM 7333) (Penicillium marneffei) protein is Methionine aminopeptidase 2-2.